The following is a 59-amino-acid chain: Conotoxin Bu1.2 (59 aa).

Residues 1-16 form the signal peptide; sequence MFTVFLLVVLATTVVS. A propeptide spanning residues 17 to 42 is cleaved from the precursor; sequence FSTDDESDGSNEEPSADQAARSAMNR. The tract at residues 18–43 is disordered; it reads STDDESDGSNEEPSADQAARSAMNRP. Over residues 19–31 the composition is skewed to acidic residues; it reads TDDESDGSNEEPS. 2 cysteine pairs are disulfide-bonded: cysteine 46-cysteine 52 and cysteine 47-cysteine 57. Glycine 58 is modified (glycine amide).

It belongs to the conotoxin A superfamily. As to expression, expressed by the venom duct.

Its subcellular location is the secreted. This Conus bullatus (Bubble cone) protein is Conotoxin Bu1.2.